The primary structure comprises 319 residues: 33 kDa chaperonin (319 aa).

Disulfide bonds link Cys-239/Cys-241 and Cys-272/Cys-275. The interval 300 to 319 is disordered; the sequence is EVSEEMKKAEEKEKEEKNKK.

It belongs to the HSP33 family. Post-translationally, under oxidizing conditions two disulfide bonds are formed involving the reactive cysteines. Under reducing conditions zinc is bound to the reactive cysteines and the protein is inactive.

The protein localises to the cytoplasm. Functionally, redox regulated molecular chaperone. Protects both thermally unfolding and oxidatively damaged proteins from irreversible aggregation. Plays an important role in the bacterial defense system toward oxidative stress. This is 33 kDa chaperonin from Clostridium perfringens (strain ATCC 13124 / DSM 756 / JCM 1290 / NCIMB 6125 / NCTC 8237 / Type A).